A 261-amino-acid chain; its full sequence is Indole-3-glycerol phosphate synthase (261 aa).

Belongs to the TrpC family.

It catalyses the reaction 1-(2-carboxyphenylamino)-1-deoxy-D-ribulose 5-phosphate + H(+) = (1S,2R)-1-C-(indol-3-yl)glycerol 3-phosphate + CO2 + H2O. It participates in amino-acid biosynthesis; L-tryptophan biosynthesis; L-tryptophan from chorismate: step 4/5. The sequence is that of Indole-3-glycerol phosphate synthase from Paraburkholderia phytofirmans (strain DSM 17436 / LMG 22146 / PsJN) (Burkholderia phytofirmans).